The sequence spans 290 residues: tRNA (guanine-N(7)-)-methyltransferase (290 aa).

Composition is skewed to basic and acidic residues over residues 1-12 (MSDSLHTPEEPR) and 20-43 (AHAHDGSLRHTRAKGEPRFPDGPK). The segment at 1–49 (MSDSLHTPEEPRPGPGEQLAHAHDGSLRHTRAKGEPRFPDGPKADPAGS) is disordered. S-adenosyl-L-methionine is bound by residues E104, D129, D156, and D179. D179 is a catalytic residue. Substrate contacts are provided by residues K183, D215, and 252–255 (TRFE).

Belongs to the class I-like SAM-binding methyltransferase superfamily. TrmB family.

The catalysed reaction is guanosine(46) in tRNA + S-adenosyl-L-methionine = N(7)-methylguanosine(46) in tRNA + S-adenosyl-L-homocysteine. It participates in tRNA modification; N(7)-methylguanine-tRNA biosynthesis. Catalyzes the formation of N(7)-methylguanine at position 46 (m7G46) in tRNA. The protein is tRNA (guanine-N(7)-)-methyltransferase of Streptomyces avermitilis (strain ATCC 31267 / DSM 46492 / JCM 5070 / NBRC 14893 / NCIMB 12804 / NRRL 8165 / MA-4680).